Reading from the N-terminus, the 105-residue chain is U-scoloptoxin(05)-Sa2a (105 aa).

An N-terminal signal peptide occupies residues 1 to 24 (MKEAVKMSCLCIFLFLFLFSLTDA). The interval 79–105 (HVPESNQKDGKVSTHMSSCNTDGCNAN) is disordered. Residues 92–105 (THMSSCNTDGCNAN) show a composition bias toward polar residues.

Belongs to the scoloptoxin-05 family. In terms of processing, contains 4 disulfide bonds. In terms of tissue distribution, expressed by the venom gland.

Its subcellular location is the secreted. The protein is U-scoloptoxin(05)-Sa2a of Scolopendra alternans (Florida Keys giant centipede).